Here is a 218-residue protein sequence, read N- to C-terminus: Putative glutamine transport system permease protein GlnP (218 aa).

The 190-residue stretch at 19–208 (TLITLKYSVI…ILVMLISFIA (190 aa)) folds into the ABC transmembrane type-1 domain. 4 helical membrane passes run 25–45 (YSVI…LCKV), 57–79 (FYTS…FASP), 86–108 (FTVF…SEVI), and 187–207 (FFPM…ISFI).

It belongs to the binding-protein-dependent transport system permease family. HisMQ subfamily.

The protein resides in the cell inner membrane. Its function is as follows. Part of the binding-protein-dependent transport system for glutamine; probably responsible for the translocation of the substrate across the membrane. The chain is Putative glutamine transport system permease protein GlnP (glnP) from Rickettsia bellii (strain RML369-C).